We begin with the raw amino-acid sequence, 444 residues long: Argininosuccinate synthase (444 aa).

ATP is bound by residues 18-26 (AFSGGLDTS) and Ala-44. L-citrulline is bound at residue Tyr-100. Residues Gly-130 and Thr-132 each coordinate ATP. Residues Thr-132, Asn-136, and Asp-137 each contribute to the L-aspartate site. Position 136 (Asn-136) interacts with L-citrulline. Residue Asp-137 coordinates ATP. L-citrulline contacts are provided by Arg-140 and Ser-193. Position 195 (Asp-195) interacts with ATP. Residues Thr-202, Glu-204, and Glu-281 each contribute to the L-citrulline site.

Belongs to the argininosuccinate synthase family. Type 2 subfamily. Homotetramer.

Its subcellular location is the cytoplasm. The catalysed reaction is L-citrulline + L-aspartate + ATP = 2-(N(omega)-L-arginino)succinate + AMP + diphosphate + H(+). Its pathway is amino-acid biosynthesis; L-arginine biosynthesis; L-arginine from L-ornithine and carbamoyl phosphate: step 2/3. This Histophilus somni (strain 2336) (Haemophilus somnus) protein is Argininosuccinate synthase.